Reading from the N-terminus, the 338-residue chain is Lipoate-protein ligase A (338 aa).

In terms of domain architecture, BPL/LPL catalytic spans 29–216; that stretch reads PTTQRVLFLW…AFFDYFGEQC (188 aa). ATP contacts are provided by residues Arg71, 76–79, and Lys134; that span reads GAVF. Position 134 (Lys134) interacts with (R)-lipoate.

Belongs to the LplA family. Monomer.

The protein localises to the cytoplasm. The enzyme catalyses L-lysyl-[lipoyl-carrier protein] + (R)-lipoate + ATP = N(6)-[(R)-lipoyl]-L-lysyl-[lipoyl-carrier protein] + AMP + diphosphate + H(+). The protein operates within protein modification; protein lipoylation via exogenous pathway; protein N(6)-(lipoyl)lysine from lipoate: step 1/2. It participates in protein modification; protein lipoylation via exogenous pathway; protein N(6)-(lipoyl)lysine from lipoate: step 2/2. Its function is as follows. Catalyzes both the ATP-dependent activation of exogenously supplied lipoate to lipoyl-AMP and the transfer of the activated lipoyl onto the lipoyl domains of lipoate-dependent enzymes. The chain is Lipoate-protein ligase A from Pectobacterium carotovorum subsp. carotovorum (strain PC1).